The sequence spans 237 residues: Ribosomal RNA small subunit methyltransferase G (237 aa).

S-adenosyl-L-methionine contacts are provided by residues glycine 78, phenylalanine 83, 129–130, and arginine 148; that span reads AE.

Belongs to the methyltransferase superfamily. RNA methyltransferase RsmG family.

The protein resides in the cytoplasm. Its function is as follows. Specifically methylates the N7 position of a guanine in 16S rRNA. This chain is Ribosomal RNA small subunit methyltransferase G, found in Streptococcus thermophilus (strain CNRZ 1066).